We begin with the raw amino-acid sequence, 130 residues long: uncharacterized protein (130 aa).

This is an uncharacterized protein from Orgyia pseudotsugata multicapsid polyhedrosis virus (OpMNPV).